The chain runs to 633 residues: Pollen receptor-like kinase 3 (633 aa).

Positions Met-1–Ser-19 are cleaved as a signal peptide. N-linked (GlcNAc...) asparagine glycans are attached at residues Asn-22 and Asn-37. Cys-53 and Cys-62 are oxidised to a cystine. 5 LRR repeats span residues Leu-90 to Gly-115, Lys-117 to Glu-137, Thr-138 to Leu-162, Ala-163 to Asn-186, and Val-188 to Arg-210. Asn-123 carries N-linked (GlcNAc...) asparagine glycosylation. Cys-224 and Cys-232 form a disulfide bridge. Residue Asn-246 is glycosylated (N-linked (GlcNAc...) asparagine). Residues Ala-249–Ile-269 form a helical membrane-spanning segment. Over residues Val-294–Asn-314 the composition is skewed to basic and acidic residues. The tract at residues Val-294–Gly-339 is disordered. The segment covering Lys-328–Met-338 has biased composition (gly residues). Positions Lys-358–Leu-633 constitute a Protein kinase domain. ATP contacts are provided by residues Leu-364–Ala-372 and Lys-386. Position 438 is a phosphoserine (Ser-438). At Thr-458 the chain carries Phosphothreonine. Residue Ser-535 is modified to Phosphoserine.

Belongs to the protein kinase superfamily. Ser/Thr protein kinase family. As to quaternary structure, interacts in vitro with ROPGEF1 (via PRONE domain). Interacts with PRK6. In terms of tissue distribution, expressed in pollen and/or in flowers, but not in leaves.

The protein localises to the membrane. The enzyme catalyses L-seryl-[protein] + ATP = O-phospho-L-seryl-[protein] + ADP + H(+). The catalysed reaction is L-threonyl-[protein] + ATP = O-phospho-L-threonyl-[protein] + ADP + H(+). Its activity is regulated as follows. The phosphorylation activity is calcium-independent. Its function is as follows. Receptor-like kinase involved in the control of pollen germination and pollen tube polar growth. Can phosphorylate ROPGEF1 in vitro. This chain is Pollen receptor-like kinase 3, found in Arabidopsis thaliana (Mouse-ear cress).